Reading from the N-terminus, the 301-residue chain is Methionyl-tRNA formyltransferase (301 aa).

109-112 (SLLP) is a (6S)-5,6,7,8-tetrahydrofolate binding site.

This sequence belongs to the Fmt family.

It carries out the reaction L-methionyl-tRNA(fMet) + (6R)-10-formyltetrahydrofolate = N-formyl-L-methionyl-tRNA(fMet) + (6S)-5,6,7,8-tetrahydrofolate + H(+). Attaches a formyl group to the free amino group of methionyl-tRNA(fMet). The formyl group appears to play a dual role in the initiator identity of N-formylmethionyl-tRNA by promoting its recognition by IF2 and preventing the misappropriation of this tRNA by the elongation apparatus. This is Methionyl-tRNA formyltransferase from Novosphingobium aromaticivorans (strain ATCC 700278 / DSM 12444 / CCUG 56034 / CIP 105152 / NBRC 16084 / F199).